Consider the following 88-residue polypeptide: Small ribosomal subunit protein uS17 (88 aa).

It belongs to the universal ribosomal protein uS17 family. As to quaternary structure, part of the 30S ribosomal subunit.

In terms of biological role, one of the primary rRNA binding proteins, it binds specifically to the 5'-end of 16S ribosomal RNA. This Dechloromonas aromatica (strain RCB) protein is Small ribosomal subunit protein uS17.